Consider the following 410-residue polypeptide: Cysteine desulfurase IscS (410 aa).

Residues 80 to 81 (AT), asparagine 160, glutamine 188, and 208 to 210 (SGH) contribute to the pyridoxal 5'-phosphate site. Lysine 211 is modified (N6-(pyridoxal phosphate)lysine). Threonine 248 lines the pyridoxal 5'-phosphate pocket. The active-site Cysteine persulfide intermediate is cysteine 334. Residue cysteine 334 participates in [2Fe-2S] cluster binding.

This sequence belongs to the class-V pyridoxal-phosphate-dependent aminotransferase family. NifS/IscS subfamily. In terms of assembly, homodimer. Forms a heterotetramer with IscU, interacts with other sulfur acceptors. Pyridoxal 5'-phosphate is required as a cofactor.

The protein resides in the cytoplasm. The catalysed reaction is (sulfur carrier)-H + L-cysteine = (sulfur carrier)-SH + L-alanine. The protein operates within cofactor biosynthesis; iron-sulfur cluster biosynthesis. In terms of biological role, master enzyme that delivers sulfur to a number of partners involved in Fe-S cluster assembly, tRNA modification or cofactor biosynthesis. Catalyzes the removal of elemental sulfur atoms from cysteine to produce alanine. Functions as a sulfur delivery protein for Fe-S cluster synthesis onto IscU, an Fe-S scaffold assembly protein, as well as other S acceptor proteins. The sequence is that of Cysteine desulfurase IscS from Rickettsia prowazekii (strain Madrid E).